Here is a 476-residue protein sequence, read N- to C-terminus: MDYDAITALRDRHPAWRLLRAGNASLVLSFLGEFFVEANRGACPAGQVAEALDNHLYALSAGSGESRYPKEPRAYLEDWAATDAGYLRRFYPPGDDEVHYEVTPAFEKAYAWVVNLQSRSFVGTESRLHTVVALLRQIVHGTEVQPDVRLAELRRRRAELEAEIAAVEAGDIAVLDPTAVRDRYQQLSTTARELLSDFREVEENFRLLDRAARERIAAWEGSKGGLLEELVGSRSEITGSDQGRSFQAFYDFLLSEQRQAELAELIAKVSALDVLEADPRIRRIHHDWSEAADRAQRTVRQISEQLRRFLDDQVWLENRRVLDLVRAVESIALEVRDAPPTFGLEVDEPGIEIALPFERPLYQPPTEVAVESHVSAATEEVNADLLFAQTYIDQARLADTIRAVLPEDSSALLSDVVAVHPIEQGAAEIVGYLALNEDDLAIDVDDTEETVLEYPDPADPDITKRARLPKVTVRRR.

Positions D147–N204 form a coiled coil.

This is an uncharacterized protein from Mycolicibacterium smegmatis (strain ATCC 700084 / mc(2)155) (Mycobacterium smegmatis).